A 117-amino-acid chain; its full sequence is UPF0102 protein Rsph17029_0461 (117 aa).

Belongs to the UPF0102 family.

In Cereibacter sphaeroides (strain ATCC 17029 / ATH 2.4.9) (Rhodobacter sphaeroides), this protein is UPF0102 protein Rsph17029_0461.